A 128-amino-acid chain; its full sequence is Small ribosomal subunit protein uS11 (128 aa).

This sequence belongs to the universal ribosomal protein uS11 family. In terms of assembly, part of the 30S ribosomal subunit. Interacts with proteins S7 and S18. Binds to IF-3.

Functionally, located on the platform of the 30S subunit, it bridges several disparate RNA helices of the 16S rRNA. Forms part of the Shine-Dalgarno cleft in the 70S ribosome. This is Small ribosomal subunit protein uS11 from Vesicomyosocius okutanii subsp. Calyptogena okutanii (strain HA).